The following is an 85-amino-acid chain: Glutaredoxin 1 (85 aa).

Residues 1–85 (MQTVIFGRSG…AAWVKENLDA (85 aa)) enclose the Glutaredoxin domain. Cysteines 11 and 14 form a disulfide.

Belongs to the glutaredoxin family. As to quaternary structure, monomer.

In terms of biological role, the disulfide bond functions as an electron carrier in the glutathione-dependent synthesis of deoxyribonucleotides by the enzyme ribonucleotide reductase. In addition, it is also involved in reducing some disulfides in a coupled system with glutathione reductase. The chain is Glutaredoxin 1 (grxA) from Shigella flexneri.